The chain runs to 344 residues: tRNA N6-adenosine threonylcarbamoyltransferase (344 aa).

2 residues coordinate Fe cation: histidine 112 and histidine 116. Substrate contacts are provided by residues 134–138 (LASGG), aspartate 167, glycine 180, and asparagine 280. Fe cation is bound at residue aspartate 308.

It belongs to the KAE1 / TsaD family. The cofactor is Fe(2+).

Its subcellular location is the cytoplasm. It catalyses the reaction L-threonylcarbamoyladenylate + adenosine(37) in tRNA = N(6)-L-threonylcarbamoyladenosine(37) in tRNA + AMP + H(+). Required for the formation of a threonylcarbamoyl group on adenosine at position 37 (t(6)A37) in tRNAs that read codons beginning with adenine. Is involved in the transfer of the threonylcarbamoyl moiety of threonylcarbamoyl-AMP (TC-AMP) to the N6 group of A37, together with TsaE and TsaB. TsaD likely plays a direct catalytic role in this reaction. This Rickettsia conorii (strain ATCC VR-613 / Malish 7) protein is tRNA N6-adenosine threonylcarbamoyltransferase.